We begin with the raw amino-acid sequence, 84 residues long: Exodeoxyribonuclease 7 small subunit (84 aa).

This sequence belongs to the XseB family. Heterooligomer composed of large and small subunits.

It localises to the cytoplasm. The catalysed reaction is Exonucleolytic cleavage in either 5'- to 3'- or 3'- to 5'-direction to yield nucleoside 5'-phosphates.. Functionally, bidirectionally degrades single-stranded DNA into large acid-insoluble oligonucleotides, which are then degraded further into small acid-soluble oligonucleotides. The protein is Exodeoxyribonuclease 7 small subunit of Yersinia pseudotuberculosis serotype O:1b (strain IP 31758).